Reading from the N-terminus, the 150-residue chain is Ribonuclease H (150 aa).

The RNase H type-1 domain maps to 1–146 (MPELFAYTDG…ADELARAGMA (146 aa)). The Mg(2+) site is built by D9, E52, D74, and D138.

Belongs to the RNase H family. In terms of assembly, monomer. It depends on Mg(2+) as a cofactor.

Its subcellular location is the cytoplasm. The enzyme catalyses Endonucleolytic cleavage to 5'-phosphomonoester.. Endonuclease that specifically degrades the RNA of RNA-DNA hybrids. The polypeptide is Ribonuclease H (Roseobacter denitrificans (strain ATCC 33942 / OCh 114) (Erythrobacter sp. (strain OCh 114))).